Reading from the N-terminus, the 442-residue chain is Serine hydroxymethyltransferase (442 aa).

Pyridoxal 5'-phosphate is bound by residues Y54, 100-102 (SGS), and H236. The cysteines at positions 125 and 364 are disulfide-linked. K237 bears the N6-(pyridoxal phosphate)lysine mark. G272 serves as a coordination point for pyridoxal 5'-phosphate.

Belongs to the SHMT family. As to quaternary structure, homodimer. Pyridoxal 5'-phosphate is required as a cofactor.

It is found in the cytoplasm. Its subcellular location is the mitochondrion matrix. It localises to the plastid. The protein localises to the apicoplast. The protein resides in the nucleus. It catalyses the reaction (6R)-5,10-methylene-5,6,7,8-tetrahydrofolate + glycine + H2O = (6S)-5,6,7,8-tetrahydrofolate + L-serine. It participates in one-carbon metabolism; tetrahydrofolate interconversion. With respect to regulation, redox regulation; active in reducing conditions, inactive in oxidizing conditions. The reduction of the cysteine pairs allows the access binding of the tetrahydrofolate substrate to its binding site. This mechanism appears to be unique to Plasmodium species. Functionally, catalyzes the interconversion of serine to glycine accompanied with the production of 5,10-methylenetetrahydrofolate, a source of one-carbon units used by thymidylate synthase to convert dUMP to dTMP for DNA synthesis. Binds to its own mRNA and to the mRNA of bifunctional dihydrofolate reductase-thymidylate synthase (DHFR-TS) in vitro; the physiological relevance of this interaction is not clear. This Plasmodium falciparum (isolate 3D7) protein is Serine hydroxymethyltransferase.